The primary structure comprises 25 residues: Fructokinase-1 (25 aa).

It belongs to the ROK (NagC/XylR) family. Homodimer. Requires Mg(2+) as cofactor.

It carries out the reaction D-fructose + ATP = D-fructose 6-phosphate + ADP + H(+). Inhibition by zinc ions (Potential). Inactivated by EDTA. This chain is Fructokinase-1, found in Lactococcus lactis subsp. lactis (Streptococcus lactis).